We begin with the raw amino-acid sequence, 381 residues long: Cytochrome b (381 aa).

The next 4 membrane-spanning stretches (helical) occupy residues Phe-34–Met-54, Trp-78–Ile-99, Trp-114–Leu-134, and Phe-179–Leu-199. Residues His-84 and His-98 each coordinate heme b. 2 residues coordinate heme b: His-183 and His-197. Residue His-202 participates in a ubiquinone binding. The next 4 helical transmembrane spans lie at Tyr-227–Met-247, Leu-289–His-309, Met-321–Gly-341, and Phe-348–Pro-368.

This sequence belongs to the cytochrome b family. The cytochrome bc1 complex contains 3 respiratory subunits (MT-CYB, CYC1 and UQCRFS1), 2 core proteins (UQCRC1 and UQCRC2) and probably 6 low-molecular weight proteins. Heme b serves as cofactor.

The protein resides in the mitochondrion inner membrane. Component of the ubiquinol-cytochrome c reductase complex (complex III or cytochrome b-c1 complex) that is part of the mitochondrial respiratory chain. The b-c1 complex mediates electron transfer from ubiquinol to cytochrome c. Contributes to the generation of a proton gradient across the mitochondrial membrane that is then used for ATP synthesis. The polypeptide is Cytochrome b (mt-cyb) (Carcharhinus plumbeus (Sandbar shark)).